Here is a 466-residue protein sequence, read N- to C-terminus: 3-isopropylmalate dehydratase large subunit (466 aa).

[4Fe-4S] cluster-binding residues include Cys347, Cys407, and Cys410.

It belongs to the aconitase/IPM isomerase family. LeuC type 1 subfamily. In terms of assembly, heterodimer of LeuC and LeuD. [4Fe-4S] cluster is required as a cofactor.

It catalyses the reaction (2R,3S)-3-isopropylmalate = (2S)-2-isopropylmalate. It functions in the pathway amino-acid biosynthesis; L-leucine biosynthesis; L-leucine from 3-methyl-2-oxobutanoate: step 2/4. In terms of biological role, catalyzes the isomerization between 2-isopropylmalate and 3-isopropylmalate, via the formation of 2-isopropylmaleate. This is 3-isopropylmalate dehydratase large subunit from Buchnera aphidicola subsp. Thelaxes suberi.